Here is a 147-residue protein sequence, read N- to C-terminus: Helix-loop-helix protein 13 (147 aa).

The 53-residue stretch at 41–93 (EERQTASIRERKRMCSINVAFIELRNYIPTFPYEKRLSKIDTLNLAIAYINML) folds into the bHLH domain.

In terms of tissue distribution, expressed in hermaphrodite dopaminergic neurons (ADE, CEP, and PDE).

It localises to the nucleus. The protein resides in the cytoplasm. Its function is as follows. Transcriptional activator. Shown to have a role in the negative regulation of exit from L1 arrest and dauer diapause dependent on IIS signaling (insulin and insulin-like growth factor (IGF) signaling). Hypodermal expression is regulated by IIS/daf-16 while neuronal expression is not under the control of IIS/daf-16. This chain is Helix-loop-helix protein 13, found in Caenorhabditis elegans.